The sequence spans 548 residues: Membrane protein insertase YidC (548 aa).

Residues 6 to 26 (NLLVIALLFVSFMIWQAWEQD) traverse the membrane as a helical segment. Positions 28–56 (NPQPQTQQTTQTTTTAAGSAADQGVPASG) are disordered. The span at 29 to 42 (PQPQTQQTTQTTTT) shows a compositional bias: low complexity. Helical transmembrane passes span 350 to 370 (FVGN…GIMY), 424 to 444 (FPLI…MGSI), 458 to 478 (LSAQ…MFFI), and 499 to 519 (PVIF…YYIV).

The protein belongs to the OXA1/ALB3/YidC family. Type 1 subfamily. Interacts with the Sec translocase complex via SecD. Specifically interacts with transmembrane segments of nascent integral membrane proteins during membrane integration.

It localises to the cell inner membrane. In terms of biological role, required for the insertion and/or proper folding and/or complex formation of integral membrane proteins into the membrane. Involved in integration of membrane proteins that insert both dependently and independently of the Sec translocase complex, as well as at least some lipoproteins. Aids folding of multispanning membrane proteins. The chain is Membrane protein insertase YidC from Salmonella typhimurium (strain LT2 / SGSC1412 / ATCC 700720).